Reading from the N-terminus, the 169-residue chain is tRNA (cytidine(56)-2'-O)-methyltransferase (169 aa).

S-adenosyl-L-methionine is bound by residues Leu77, 103-107, and 121-128; these read GSEKV and IGNQPHSE.

Belongs to the aTrm56 family. In terms of assembly, homodimer.

It is found in the cytoplasm. It catalyses the reaction cytidine(56) in tRNA + S-adenosyl-L-methionine = 2'-O-methylcytidine(56) in tRNA + S-adenosyl-L-homocysteine + H(+). In terms of biological role, specifically catalyzes the AdoMet-dependent 2'-O-ribose methylation of cytidine at position 56 in tRNAs. The sequence is that of tRNA (cytidine(56)-2'-O)-methyltransferase from Sulfurisphaera tokodaii (strain DSM 16993 / JCM 10545 / NBRC 100140 / 7) (Sulfolobus tokodaii).